Consider the following 240-residue polypeptide: uncharacterized protein (240 aa).

This is an uncharacterized protein from Methanocaldococcus jannaschii (strain ATCC 43067 / DSM 2661 / JAL-1 / JCM 10045 / NBRC 100440) (Methanococcus jannaschii).